The following is a 470-amino-acid chain: Ribosomal protein uS12 methylthiotransferase RimO (470 aa).

Residues 1-27 (MPCQAPHSDSNVKNPSEATNQKDHSPR) are disordered. The segment covering 7–19 (HSDSNVKNPSEAT) has biased composition (polar residues). In terms of domain architecture, MTTase N-terminal spans 26-141 (PRVGFVSLGC…VMQAVHTHLP (116 aa)). Residues cysteine 35, cysteine 71, cysteine 100, cysteine 172, cysteine 176, and cysteine 179 each contribute to the [4Fe-4S] cluster site. The region spanning 158–399 (LTPKHYAYLK…MEVAEAVSAR (242 aa)) is the Radical SAM core domain. The 69-residue stretch at 402–470 (QRKVGQTLRV…ADGHDLWGEV (69 aa)) folds into the TRAM domain.

The protein belongs to the methylthiotransferase family. RimO subfamily. The cofactor is [4Fe-4S] cluster.

Its subcellular location is the cytoplasm. The catalysed reaction is L-aspartate(89)-[ribosomal protein uS12]-hydrogen + (sulfur carrier)-SH + AH2 + 2 S-adenosyl-L-methionine = 3-methylsulfanyl-L-aspartate(89)-[ribosomal protein uS12]-hydrogen + (sulfur carrier)-H + 5'-deoxyadenosine + L-methionine + A + S-adenosyl-L-homocysteine + 2 H(+). Functionally, catalyzes the methylthiolation of an aspartic acid residue of ribosomal protein uS12. In Cupriavidus taiwanensis (strain DSM 17343 / BCRC 17206 / CCUG 44338 / CIP 107171 / LMG 19424 / R1) (Ralstonia taiwanensis (strain LMG 19424)), this protein is Ribosomal protein uS12 methylthiotransferase RimO.